The primary structure comprises 178 residues: ATP synthase subunit delta (178 aa).

Belongs to the ATPase delta chain family. As to quaternary structure, F-type ATPases have 2 components, F(1) - the catalytic core - and F(0) - the membrane proton channel. F(1) has five subunits: alpha(3), beta(3), gamma(1), delta(1), epsilon(1). F(0) has three main subunits: a(1), b(2) and c(10-14). The alpha and beta chains form an alternating ring which encloses part of the gamma chain. F(1) is attached to F(0) by a central stalk formed by the gamma and epsilon chains, while a peripheral stalk is formed by the delta and b chains.

It is found in the cell inner membrane. In terms of biological role, f(1)F(0) ATP synthase produces ATP from ADP in the presence of a proton or sodium gradient. F-type ATPases consist of two structural domains, F(1) containing the extramembraneous catalytic core and F(0) containing the membrane proton channel, linked together by a central stalk and a peripheral stalk. During catalysis, ATP synthesis in the catalytic domain of F(1) is coupled via a rotary mechanism of the central stalk subunits to proton translocation. This protein is part of the stalk that links CF(0) to CF(1). It either transmits conformational changes from CF(0) to CF(1) or is implicated in proton conduction. This chain is ATP synthase subunit delta, found in Chromobacterium violaceum (strain ATCC 12472 / DSM 30191 / JCM 1249 / CCUG 213 / NBRC 12614 / NCIMB 9131 / NCTC 9757 / MK).